Reading from the N-terminus, the 553-residue chain is Hydroxylamine reductase (553 aa).

4 residues coordinate [2Fe-2S] cluster: Cys3, Cys6, Cys18, and Cys25. The hybrid [4Fe-2O-2S] cluster site is built by His249, Glu273, Cys317, Cys405, Cys433, Cys459, Glu493, and Lys495. At Cys405 the chain carries Cysteine persulfide.

Belongs to the HCP family. [2Fe-2S] cluster serves as cofactor. Hybrid [4Fe-2O-2S] cluster is required as a cofactor.

Its subcellular location is the cytoplasm. It carries out the reaction A + NH4(+) + H2O = hydroxylamine + AH2 + H(+). In terms of biological role, catalyzes the reduction of hydroxylamine to form NH(3) and H(2)O. This is Hydroxylamine reductase from Mannheimia succiniciproducens (strain KCTC 0769BP / MBEL55E).